The chain runs to 541 residues: Threonine--tRNA ligase catalytic subunit (541 aa).

The segment at 135 to 429 (DHRIIGERMD…LLEHFRGKLP (295 aa)) is catalytic. Residues Cys-227, His-278, and His-406 each coordinate Zn(2+).

This sequence belongs to the class-II aminoacyl-tRNA synthetase family. Homodimer. Probably interacts with its editing subunit. The cofactor is Zn(2+).

The protein resides in the cytoplasm. The catalysed reaction is tRNA(Thr) + L-threonine + ATP = L-threonyl-tRNA(Thr) + AMP + diphosphate + H(+). Functionally, catalyzes the attachment of threonine to tRNA(Thr) in a two-step reaction: L-threonine is first activated by ATP to form Thr-AMP and then transferred to the acceptor end of tRNA(Thr). Also activates L-serine and transfers it to tRNA(Thr) but cannot deacylate incorrectly charged amino acid; unlike most archaea the editing function is found in a freestanding protein. The protein is Threonine--tRNA ligase catalytic subunit of Metallosphaera sedula (strain ATCC 51363 / DSM 5348 / JCM 9185 / NBRC 15509 / TH2).